Consider the following 564-residue polypeptide: MDIFRVLTRGASVKKESGPKAKAADYSVINGKDENHKEDNNESQIVKELDFFRNKRIISKVEDDREKTTENDSPNKEEKSGNDDGLIKPVITNTVEASALRKSYKGNVSGIDIPLPIGSFEDLISRFSFDRRLLNNLIENGFTEPTPIQCECIPVALNNRDVLACGPTGSGKTLAFLIPLVQQIIDDKQTAGLKGLIISPTKELANQIFIECFKLSHKIFLEKKRPLQVALLSKSLGAKLKNKVVSDKKYDIIISTPLRLIDVVKNEALDLSKVKHLIFDEADKLFDKTFVEQSDDILSACREPSLRKAMFSATIPSNVEEIAQSIMMDPVRVIIGHKEAANTNIEQKLIFCGNEEGKLIAIRQLVQEGEFKPPIIIFLESITRAKALYHELMYDRINVDVIHAERTALQRDRIIERFKTGELWCLICTDVLARGIDFKGVNLVINYDVPGSSQAYVHRIGRTGRGGRSGKAITFYTKQDSVAIKPIINVMKQSGCEVSEWMDKMAKMTRKEKESIKNGKAHKERKQITTVPKMDKAKRRRQQEMIAASKRRKNEELSKKHFSK.

Disordered regions lie at residues 1-25 (MDIFRVLTRGASVKKESGPKAKAAD) and 62-87 (EDDREKTTENDSPNKEEKSGNDDGLI). Basic and acidic residues-rich tracts occupy residues 13-23 (VKKESGPKAKA) and 62-86 (EDDREKTTENDSPNKEEKSGNDDGL). The short motif at 122–150 (DLISRFSFDRRLLNNLIENGFTEPTPIQC) is the Q motif element. Residues 153–333 (IPVALNNRDV…QSIMMDPVRV (181 aa)) form the Helicase ATP-binding domain. 166–173 (GPTGSGKT) contributes to the ATP binding site. Positions 280 to 283 (DEAD) match the DEAD box motif. Residues 344 to 506 (NIEQKLIFCG…EVSEWMDKMA (163 aa)) enclose the Helicase C-terminal domain. The tract at residues 512-564 (EKESIKNGKAHKERKQITTVPKMDKAKRRRQQEMIAASKRRKNEELSKKHFSK) is disordered. The span at 553-564 (KNEELSKKHFSK) shows a compositional bias: basic and acidic residues.

The protein belongs to the DEAD box helicase family. DDX52/ROK1 subfamily. Interacts with the U3 snoRNA and is associated with the 90S and 40S pre-ribosomes. This association requires the presence of RRP5. Also interacts with OSH3.

It is found in the nucleus. The protein localises to the nucleolus. The enzyme catalyses ATP + H2O = ADP + phosphate + H(+). Its function is as follows. ATP-dependent RNA helicase involved in 40S ribosomal subunit biogenesis. Required for the processing and cleavage of 35S pre-rRNA at sites A0, A1, and A2, leading to mature 18S rRNA. The polypeptide is ATP-dependent RNA helicase ROK1 (ROK1) (Saccharomyces cerevisiae (strain YJM789) (Baker's yeast)).